Here is a 499-residue protein sequence, read N- to C-terminus: Probable alpha-L-arabinofuranosidase B (499 aa).

Residues 1–18 (MFSRRNLVALGLAATVSA) form the signal peptide. A catalytic region spans residues 19–335 (GPCDIYEAGD…ENIVAAKYVS (317 aa)). 3 disulfides stabilise this stretch: Cys21–Cys31, Cys81–Cys86, and Cys176–Cys177. N-linked (GlcNAc...) asparagine glycosylation is present at Asn83. A glycan (N-linked (GlcNAc...) asparagine) is linked at Asn202. Asp219 contacts substrate. The active-site Nucleophile is the Glu221. Residues Asn222, Asn223, and Gly296 each contribute to the substrate site. The active-site Proton donor is Asp297. The tract at residues 336-499 (GSLVSGPSFT…SFEIETAFAS (164 aa)) is ABD. The cysteines at positions 401 and 439 are disulfide-linked. Positions 416, 418, 419, 435, 463, 465, 468, and 488 each coordinate substrate.

The protein belongs to the glycosyl hydrolase 54 family.

It localises to the secreted. The catalysed reaction is Hydrolysis of terminal non-reducing alpha-L-arabinofuranoside residues in alpha-L-arabinosides.. Its pathway is glycan metabolism; L-arabinan degradation. Its function is as follows. Alpha-L-arabinofuranosidase involved in the degradation of arabinoxylan, a major component of plant hemicellulose. Able to hydrolyze 1,5-, 1,3- and 1,2-alpha-linkages not only in L-arabinofuranosyl oligosaccharides, but also in polysaccharides containing terminal non-reducing L-arabinofuranoses in side chains, like L-arabinan, arabinogalactan and arabinoxylan. The chain is Probable alpha-L-arabinofuranosidase B (abfB) from Aspergillus niger (strain ATCC MYA-4892 / CBS 513.88 / FGSC A1513).